A 458-amino-acid polypeptide reads, in one-letter code: tRNA modification GTPase MnmE (458 aa).

3 residues coordinate (6S)-5-formyl-5,6,7,8-tetrahydrofolate: Arg26, Glu88, and Arg127. In terms of domain architecture, TrmE-type G spans 224–378 (GLSTAIIGRP…IEDRINQLFF (155 aa)). A K(+)-binding site is contributed by Asn234. GTP contacts are provided by residues 234 to 239 (NVGKSS), 253 to 259 (TDIAGTT), and 278 to 281 (DTAG). Residue Ser238 coordinates Mg(2+). The K(+) site is built by Thr253, Ile255, and Thr258. Thr259 contacts Mg(2+). Lys458 provides a ligand contact to (6S)-5-formyl-5,6,7,8-tetrahydrofolate.

It belongs to the TRAFAC class TrmE-Era-EngA-EngB-Septin-like GTPase superfamily. TrmE GTPase family. In terms of assembly, homodimer. Heterotetramer of two MnmE and two MnmG subunits. It depends on K(+) as a cofactor.

It is found in the cytoplasm. Exhibits a very high intrinsic GTPase hydrolysis rate. Involved in the addition of a carboxymethylaminomethyl (cmnm) group at the wobble position (U34) of certain tRNAs, forming tRNA-cmnm(5)s(2)U34. This is tRNA modification GTPase MnmE from Streptococcus pyogenes serotype M6 (strain ATCC BAA-946 / MGAS10394).